Here is a 296-residue protein sequence, read N- to C-terminus: Urease accessory protein UreD (296 aa).

The protein belongs to the UreD family. In terms of assembly, ureD, UreF and UreG form a complex that acts as a GTP-hydrolysis-dependent molecular chaperone, activating the urease apoprotein by helping to assemble the nickel containing metallocenter of UreC. The UreE protein probably delivers the nickel.

The protein localises to the cytoplasm. Functionally, required for maturation of urease via the functional incorporation of the urease nickel metallocenter. In Methylibium petroleiphilum (strain ATCC BAA-1232 / LMG 22953 / PM1), this protein is Urease accessory protein UreD.